The following is a 475-amino-acid chain: 3-hydroxyacyl-CoA dehydrogenase-like protein LAM1 (475 aa).

Residue Gly99 to Ala104 participates in NAD(+) binding. Lys149 provides a ligand contact to CoA. Asn245 serves as a coordination point for NAD(+).

It belongs to the 3-hydroxyacyl-CoA dehydrogenase family.

It functions in the pathway mycotoxin biosynthesis. Functionally, 3-hydroxyacyl-CoA dehydrogenase-like protein; part of the Tox1A locus, one of the 2 loci that mediate the biosynthesis of T-toxin, a family of linear polyketides 37 to 45 carbons in length, of which the major component is 41 carbons, and which leads to high virulence to maize. One of the PKSs (PKS1 or PKS2) could synthesize a precursor, used subsequently by the other PKS as starter unit, to add additional carbons. Variability in the length of the final carbon backbone C35-47 could be achieved by varying the number of condensation cycles, or use of different starter or extender units or might be due to decarboxylation of the penultimate product, catalyzed by DEC1. Additional proteins are required for the biosynthesis of T-toxin, including oxidoreductases RED1, RED2, RED3, LAM1 and OXI1, as well as esterase TOX9. This is 3-hydroxyacyl-CoA dehydrogenase-like protein LAM1 from Cochliobolus heterostrophus (strain C4 / ATCC 48331 / race T) (Southern corn leaf blight fungus).